Here is a 257-residue protein sequence, read N- to C-terminus: Acetylglutamate kinase (257 aa).

Residues 43-44 (GG), Arg65, and Asn157 each bind substrate. Residues 180-185 (DISSIL) and 208-210 (IIT) each bind ATP.

This sequence belongs to the acetylglutamate kinase family. ArgB subfamily. As to quaternary structure, homodimer.

Its subcellular location is the cytoplasm. It catalyses the reaction N-acetyl-L-glutamate + ATP = N-acetyl-L-glutamyl 5-phosphate + ADP. The protein operates within amino-acid biosynthesis; L-arginine biosynthesis; N(2)-acetyl-L-ornithine from L-glutamate: step 2/4. Its function is as follows. Catalyzes the ATP-dependent phosphorylation of N-acetyl-L-glutamate. The chain is Acetylglutamate kinase from Buchnera aphidicola subsp. Acyrthosiphon pisum (strain 5A).